Consider the following 176-residue polypeptide: RNA pyrophosphohydrolase (176 aa).

One can recognise a Nudix hydrolase domain in the interval 6–149 (GYRPNVGIVI…KRDVYRRVMK (144 aa)). Residues 38 to 59 (GGINPGESAEQAMYRELFEEVG) carry the Nudix box motif.

This sequence belongs to the Nudix hydrolase family. RppH subfamily. A divalent metal cation is required as a cofactor.

Functionally, accelerates the degradation of transcripts by removing pyrophosphate from the 5'-end of triphosphorylated RNA, leading to a more labile monophosphorylated state that can stimulate subsequent ribonuclease cleavage. The polypeptide is RNA pyrophosphohydrolase (Shigella boydii serotype 4 (strain Sb227)).